The following is a 678-amino-acid chain: Probable 3',5'-cyclic phosphodiesterase pde-3 (678 aa).

3 disordered regions span residues 1-27 (MSPG…FQPT), 52-95 (AEMR…VLGG), and 223-250 (TVPA…NEHE). The span at 7–19 (AVGGVSPPVMVPG) shows a compositional bias: low complexity. Composition is skewed to polar residues over residues 60–85 (TATS…NSGV) and 231–246 (ARSS…PSNN). Residues 281-632 (RYDTRELDTD…RKWKEQIELE (352 aa)) enclose the PDEase domain. Catalysis depends on His356, which acts as the Proton donor. Residues His360, His421, Asp422, and Asp531 each contribute to the a divalent metal cation site. A disordered region spans residues 654–678 (EEESASTSDSPDPRRDSPLDSDLSQ).

It belongs to the cyclic nucleotide phosphodiesterase family. Requires a divalent metal cation as cofactor.

It catalyses the reaction a nucleoside 3',5'-cyclic phosphate + H2O = a nucleoside 5'-phosphate + H(+). This is Probable 3',5'-cyclic phosphodiesterase pde-3 (pde-3) from Caenorhabditis elegans.